The chain runs to 101 residues: Protein translation factor SUI1 homolog (101 aa).

The protein belongs to the SUI1 family.

This is Protein translation factor SUI1 homolog from Methanoregula boonei (strain DSM 21154 / JCM 14090 / 6A8).